We begin with the raw amino-acid sequence, 452 residues long: Pup--protein ligase (452 aa).

Position 9 (E9) interacts with Mg(2+). R53 serves as a coordination point for ATP. Position 55 (Y55) interacts with Mg(2+). Catalysis depends on D57, which acts as the Proton acceptor. E63 lines the Mg(2+) pocket. ATP is bound by residues T66 and W419.

This sequence belongs to the Pup ligase/Pup deamidase family. Pup-conjugating enzyme subfamily.

The enzyme catalyses ATP + [prokaryotic ubiquitin-like protein]-L-glutamate + [protein]-L-lysine = ADP + phosphate + N(6)-([prokaryotic ubiquitin-like protein]-gamma-L-glutamyl)-[protein]-L-lysine.. It participates in protein degradation; proteasomal Pup-dependent pathway. The protein operates within protein modification; protein pupylation. In terms of biological role, catalyzes the covalent attachment of the prokaryotic ubiquitin-like protein modifier Pup to the proteasomal substrate proteins, thereby targeting them for proteasomal degradation. This tagging system is termed pupylation. The ligation reaction involves the side-chain carboxylate of the C-terminal glutamate of Pup and the side-chain amino group of a substrate lysine. The chain is Pup--protein ligase from Saccharomonospora viridis (strain ATCC 15386 / DSM 43017 / JCM 3036 / CCUG 5913 / NBRC 12207 / NCIMB 9602 / P101) (Thermoactinomyces viridis).